We begin with the raw amino-acid sequence, 310 residues long: tRNA dimethylallyltransferase (310 aa).

24 to 31 is a binding site for ATP; that stretch reads GPTASGKT. Residue 26-31 participates in substrate binding; that stretch reads TASGKT. Positions 49-52 are interaction with substrate tRNA; the sequence is DSRQ.

The protein belongs to the IPP transferase family. As to quaternary structure, monomer. Mg(2+) serves as cofactor.

It catalyses the reaction adenosine(37) in tRNA + dimethylallyl diphosphate = N(6)-dimethylallyladenosine(37) in tRNA + diphosphate. In terms of biological role, catalyzes the transfer of a dimethylallyl group onto the adenine at position 37 in tRNAs that read codons beginning with uridine, leading to the formation of N6-(dimethylallyl)adenosine (i(6)A). In Synechococcus sp. (strain CC9311), this protein is tRNA dimethylallyltransferase.